Consider the following 418-residue polypeptide: Histidine--tRNA ligase (418 aa).

It belongs to the class-II aminoacyl-tRNA synthetase family. In terms of assembly, homodimer.

It is found in the cytoplasm. It carries out the reaction tRNA(His) + L-histidine + ATP = L-histidyl-tRNA(His) + AMP + diphosphate + H(+). The polypeptide is Histidine--tRNA ligase (Thermosipho africanus (strain TCF52B)).